The primary structure comprises 35 residues: Kappa-theraphotoxin-Tb1c (35 aa).

Disulfide bonds link C3-C18, C10-C23, and C17-C30.

This sequence belongs to the neurotoxin 10 (Hwtx-1) family. 59 (Tltx) subfamily. In terms of assembly, monomer. As to expression, expressed by the venom gland.

The protein resides in the secreted. Its function is as follows. Blocks Kv4.2/KCND2 voltage-gated potassium channels probably by shifting the voltage-dependence of channel activation to more depolarized potentials and by binding to the S3-S4 linker region of the voltage sensor domain. This Theraphosa blondi (Goliath birdeating spider) protein is Kappa-theraphotoxin-Tb1c.